We begin with the raw amino-acid sequence, 223 residues long: Transcriptional regulatory protein HprR (223 aa).

The 114-residue stretch at 2 to 115 folds into the Response regulatory domain; that stretch reads KILLIEDNQR…ELLARVRAQL (114 aa). 4-aspartylphosphate is present on D51. Positions 122 to 220 form a DNA-binding region, ompR/PhoB-type; the sequence is NSTLEISGLR…IRGMGYSFVA (99 aa).

In terms of processing, phosphorylated by HprS.

The protein localises to the cytoplasm. Its function is as follows. Member of a two-component regulatory system HprR/HprS involved in response to hydrogen peroxide. Regulates the expression of at least 5 operons, cyoABCDE, hprRS, hiuH, cusRS and cusCFBA. Bifunctional regulator that acts as an activator and a repressor. The sequence is that of Transcriptional regulatory protein HprR from Escherichia coli (strain K12).